Reading from the N-terminus, the 182-residue chain is Riboflavin kinase (182 aa).

Residues threonine 39 and asparagine 41 each contribute to the Mg(2+) site. Glutamate 117 (nucleophile) is an active-site residue.

This sequence belongs to the flavokinase family. The cofactor is Zn(2+). Mg(2+) is required as a cofactor.

The catalysed reaction is riboflavin + ATP = FMN + ADP + H(+). It functions in the pathway cofactor biosynthesis; FMN biosynthesis; FMN from riboflavin (ATP route): step 1/1. Functionally, catalyzes the phosphorylation of riboflavin (vitamin B2) to form flavin mononucleotide (FMN) coenzyme. The polypeptide is Riboflavin kinase (FMN1) (Lodderomyces elongisporus (strain ATCC 11503 / CBS 2605 / JCM 1781 / NBRC 1676 / NRRL YB-4239) (Yeast)).